Consider the following 107-residue polypeptide: Translation initiation factor IF-1, chloroplastic (107 aa).

Residues Arg-8–Pro-83 form the S1-like domain. Residues Arg-81–Gly-107 are disordered. Residues Pro-83 to Gly-107 are compositionally biased toward basic and acidic residues.

Belongs to the IF-1 family. In terms of assembly, component of the 30S ribosomal translation pre-initiation complex which assembles on the 30S ribosome in the order IF-2 and IF-3, IF-1 and N-formylmethionyl-tRNA(fMet); mRNA recruitment can occur at any time during PIC assembly.

It localises to the plastid. It is found in the chloroplast. Functionally, one of the essential components for the initiation of protein synthesis. Stabilizes the binding of IF-2 and IF-3 on the 30S subunit to which N-formylmethionyl-tRNA(fMet) subsequently binds. Helps modulate mRNA selection, yielding the 30S pre-initiation complex (PIC). Upon addition of the 50S ribosomal subunit IF-1, IF-2 and IF-3 are released leaving the mature 70S translation initiation complex. This Oryza sativa subsp. indica (Rice) protein is Translation initiation factor IF-1, chloroplastic.